A 98-amino-acid chain; its full sequence is uncharacterized protein (98 aa).

The N-terminal stretch at 1 to 23 (MKKMQSIVLALSLVLVAPMAAQA) is a signal peptide. The disordered stretch occupies residues 68–98 (WHLHGPPPPPRHHKKAPHDHHGGHGPGKHHR). A compositionally biased stretch (basic residues) spans 77–98 (PRHHKKAPHDHHGGHGPGKHHR).

This sequence to E.coli YpeC.

This is an uncharacterized protein from Escherichia coli (strain K12).